Consider the following 321-residue polypeptide: CRISPR system ring nuclease SSO1393 (321 aa).

The protein belongs to the cOA ring nuclease family. As to quaternary structure, homodimer. It depends on Does not require a metal cofactor. as a cofactor.

It localises to the cytoplasm. The catalysed reaction is cyclic tetraadenylate = 2 5'-hydroxy-diadenylate 2',3'-cylic phosphate. In terms of biological role, CRISPR (clustered regularly interspaced short palindromic repeat) is an adaptive immune system that provides protection against mobile genetic elements (viruses, transposable elements and conjugative plasmids). CRISPR clusters contain spacers, sequences complementary to antecedent mobile elements, and target invading nucleic acids. CRISPR clusters are transcribed and processed into CRISPR RNA (crRNA). A nuclease that degrades cyclic oligoadenylates (cOA), second messengers that induce an antiviral state important for defense against invading nucleic acids. Destruction of cOA deactivates the Csx1 ribonuclease, preventing uncontrolled degradation of cellular RNA. Slowly degrades cA4 (a tetraadenylate ring) into first a linear tetraadenylate product and secondly into a linear diadenylate product with 5'-OH and 2',3'-cyclic phosphate termini. Is 10-fold less active than SSO2081, suggesting it plays a minor role in cA4 degradation. There may be 2 active sites per homodimer. The protein is CRISPR system ring nuclease SSO1393 of Saccharolobus solfataricus (strain ATCC 35092 / DSM 1617 / JCM 11322 / P2) (Sulfolobus solfataricus).